Reading from the N-terminus, the 472-residue chain is Tryptophanase (472 aa).

An N6-(pyridoxal phosphate)lysine modification is found at Lys270.

This sequence belongs to the beta-eliminating lyase family. As to quaternary structure, homotetramer. Pyridoxal 5'-phosphate serves as cofactor.

It catalyses the reaction L-tryptophan + H2O = indole + pyruvate + NH4(+). The protein operates within amino-acid degradation; L-tryptophan degradation via pyruvate pathway; indole and pyruvate from L-tryptophan: step 1/1. The protein is Tryptophanase (tnaA) of Haemophilus influenzae.